The following is a 298-amino-acid chain: Bifunctional protein FolD (298 aa).

Residues 167–169, Ser192, and Val233 contribute to the NADP(+) site; that span reads GRS.

It belongs to the tetrahydrofolate dehydrogenase/cyclohydrolase family. As to quaternary structure, homodimer.

The catalysed reaction is (6R)-5,10-methylene-5,6,7,8-tetrahydrofolate + NADP(+) = (6R)-5,10-methenyltetrahydrofolate + NADPH. It carries out the reaction (6R)-5,10-methenyltetrahydrofolate + H2O = (6R)-10-formyltetrahydrofolate + H(+). Its pathway is one-carbon metabolism; tetrahydrofolate interconversion. Catalyzes the oxidation of 5,10-methylenetetrahydrofolate to 5,10-methenyltetrahydrofolate and then the hydrolysis of 5,10-methenyltetrahydrofolate to 10-formyltetrahydrofolate. The chain is Bifunctional protein FolD from Chelativorans sp. (strain BNC1).